Reading from the N-terminus, the 550-residue chain is Chaperonin GroEL (550 aa).

Residues 30–33 (TLGP), K51, 87–91 (DGTTT), G415, 478–480 (NAA), and D494 contribute to the ATP site.

This sequence belongs to the chaperonin (HSP60) family. Forms a cylinder of 14 subunits composed of two heptameric rings stacked back-to-back. Interacts with the co-chaperonin GroES.

It is found in the cytoplasm. It catalyses the reaction ATP + H2O + a folded polypeptide = ADP + phosphate + an unfolded polypeptide.. Together with its co-chaperonin GroES, plays an essential role in assisting protein folding. The GroEL-GroES system forms a nano-cage that allows encapsulation of the non-native substrate proteins and provides a physical environment optimized to promote and accelerate protein folding. This chain is Chaperonin GroEL, found in Desulfosudis oleivorans (strain DSM 6200 / JCM 39069 / Hxd3) (Desulfococcus oleovorans).